The following is a 368-amino-acid chain: S-adenosylmethionine decarboxylase proenzyme 1 (368 aa).

Catalysis depends on residues E9 and R12. S69 acts as the Schiff-base intermediate with substrate; via pyruvic acid in catalysis. S69 is modified (pyruvic acid (Ser); by autocatalysis). The active-site Proton donor; for catalytic activity is C83. Residues S234 and H247 each act as proton acceptor; for processing activity in the active site.

Belongs to the eukaryotic AdoMetDC family. Requires pyruvate as cofactor. Is synthesized initially as an inactive proenzyme. Formation of the active enzyme involves a self-maturation process in which the active site pyruvoyl group is generated from an internal serine residue via an autocatalytic post-translational modification. Two non-identical subunits are generated from the proenzyme in this reaction, and the pyruvate is formed at the N-terminus of the alpha chain, which is derived from the carboxyl end of the proenzyme. The post-translation cleavage follows an unusual pathway, termed non-hydrolytic serinolysis, in which the side chain hydroxyl group of the serine supplies its oxygen atom to form the C-terminus of the beta chain, while the remainder of the serine residue undergoes an oxidative deamination to produce ammonia and the pyruvoyl group blocking the N-terminus of the alpha chain.

It carries out the reaction S-adenosyl-L-methionine + H(+) = S-adenosyl 3-(methylsulfanyl)propylamine + CO2. The protein operates within amine and polyamine biosynthesis; S-adenosylmethioninamine biosynthesis; S-adenosylmethioninamine from S-adenosyl-L-methionine: step 1/1. This Brassica juncea (Indian mustard) protein is S-adenosylmethionine decarboxylase proenzyme 1 (SAMDC1).